A 235-amino-acid chain; its full sequence is Pyridoxine/pyridoxamine 5'-phosphate oxidase (235 aa).

Residues 30–33 and Lys-88 contribute to the substrate site; that span reads RQEY. Residues 83–88, 98–99, Arg-104, Lys-105, and Gln-127 each bind FMN; these read RTVLLK and YT. Residues Tyr-145, Arg-149, and Ser-153 each coordinate substrate. FMN is bound by residues 162-163 and Trp-207; that span reads QS. Residue 213-215 participates in substrate binding; it reads RLH. An FMN-binding site is contributed by Arg-217.

Belongs to the pyridoxamine 5'-phosphate oxidase family. As to quaternary structure, homodimer. It depends on FMN as a cofactor.

The enzyme catalyses pyridoxamine 5'-phosphate + O2 + H2O = pyridoxal 5'-phosphate + H2O2 + NH4(+). The catalysed reaction is pyridoxine 5'-phosphate + O2 = pyridoxal 5'-phosphate + H2O2. The protein operates within cofactor metabolism; pyridoxal 5'-phosphate salvage; pyridoxal 5'-phosphate from pyridoxamine 5'-phosphate: step 1/1. Its pathway is cofactor metabolism; pyridoxal 5'-phosphate salvage; pyridoxal 5'-phosphate from pyridoxine 5'-phosphate: step 1/1. Catalyzes the oxidation of either pyridoxine 5'-phosphate (PNP) or pyridoxamine 5'-phosphate (PMP) into pyridoxal 5'-phosphate (PLP). The chain is Pyridoxine/pyridoxamine 5'-phosphate oxidase from Bacteroides fragilis (strain YCH46).